Reading from the N-terminus, the 94-residue chain is Small ribosomal subunit protein uS19m (94 aa).

Belongs to the universal ribosomal protein uS19 family.

It is found in the mitochondrion. The protein is Small ribosomal subunit protein uS19m (RPS19) of Petunia hybrida (Petunia).